Here is a 218-residue protein sequence, read N- to C-terminus: MRLILLGAPGAGKGTQANYIREKFGIPQISTGDMLRAAVKAGTPLGLEAKAIMDAGGLVRDDIIIGLVKERIAQDDCANGFLFDGFPRTIPQAEAMIAAGVDIDYVVEIDVPDAAIVERMAGRRVHLASGRTYHVTFNPPKAAGKDDVTGEDLVQRDDDKEETVKKRLAVYHEQTAVLVGFYGKLAESGSAKAPKYVKIDGTRAVETVRDDVLKALGA.

10–15 (GAGKGT) is a binding site for ATP. Residues 30–59 (STGDMLRAAVKAGTPLGLEAKAIMDAGGLV) form an NMP region. Residues threonine 31, arginine 36, 57–59 (GLV), 85–88 (GFPR), and glutamine 92 contribute to the AMP site. The LID stretch occupies residues 122–159 (GRRVHLASGRTYHVTFNPPKAAGKDDVTGEDLVQRDDD). ATP contacts are provided by residues arginine 123 and 132–133 (TY). 2 residues coordinate AMP: arginine 156 and arginine 167. Residue arginine 203 participates in ATP binding.

The protein belongs to the adenylate kinase family. In terms of assembly, monomer.

The protein resides in the cytoplasm. The enzyme catalyses AMP + ATP = 2 ADP. The protein operates within purine metabolism; AMP biosynthesis via salvage pathway; AMP from ADP: step 1/1. Catalyzes the reversible transfer of the terminal phosphate group between ATP and AMP. Plays an important role in cellular energy homeostasis and in adenine nucleotide metabolism. The polypeptide is Adenylate kinase (Chromobacterium violaceum (strain ATCC 12472 / DSM 30191 / JCM 1249 / CCUG 213 / NBRC 12614 / NCIMB 9131 / NCTC 9757 / MK)).